The following is a 175-amino-acid chain: Glutamyl-tRNA(Gln) amidotransferase subunit C, mitochondrial (175 aa).

It belongs to the GatC family. In terms of assembly, subunit of the heterotrimeric GatCAB amidotransferase (AdT) complex, composed of A, B and C subunits.

It is found in the mitochondrion. It catalyses the reaction L-glutamyl-tRNA(Gln) + L-glutamine + ATP + H2O = L-glutaminyl-tRNA(Gln) + L-glutamate + ADP + phosphate + H(+). Functionally, allows the formation of correctly charged Gln-tRNA(Gln) through the transamidation of misacylated Glu-tRNA(Gln) in the mitochondria. The reaction takes place in the presence of glutamine and ATP through an activated gamma-phospho-Glu-tRNA(Gln). The protein is Glutamyl-tRNA(Gln) amidotransferase subunit C, mitochondrial of Caenorhabditis elegans.